The following is a 304-amino-acid chain: N-acetyl-D-glucosamine kinase (304 aa).

ATP is bound by residues 4-11 (GFDMGGTK) and 133-140 (GLGGGLVI). 4 residues coordinate Zn(2+): histidine 157, cysteine 177, cysteine 179, and cysteine 184.

Belongs to the ROK (NagC/XylR) family. NagK subfamily.

The enzyme catalyses N-acetyl-D-glucosamine + ATP = N-acetyl-D-glucosamine 6-phosphate + ADP + H(+). Its pathway is cell wall biogenesis; peptidoglycan recycling. Catalyzes the phosphorylation of N-acetyl-D-glucosamine (GlcNAc) derived from cell-wall degradation, yielding GlcNAc-6-P. This is N-acetyl-D-glucosamine kinase from Pectobacterium carotovorum subsp. carotovorum (strain PC1).